The following is a 156-amino-acid chain: 6,7-dimethyl-8-ribityllumazine synthase (156 aa).

Residues Phe-22, 57–59, and 81–83 each bind 5-amino-6-(D-ribitylamino)uracil; these read AYE and TVI. (2S)-2-hydroxy-3-oxobutyl phosphate is bound at residue 86 to 87; that stretch reads GT. Catalysis depends on His-89, which acts as the Proton donor. Residue Phe-114 coordinates 5-amino-6-(D-ribitylamino)uracil. Arg-128 contacts (2S)-2-hydroxy-3-oxobutyl phosphate.

Belongs to the DMRL synthase family. In terms of assembly, forms an icosahedral capsid composed of 60 subunits, arranged as a dodecamer of pentamers.

The enzyme catalyses (2S)-2-hydroxy-3-oxobutyl phosphate + 5-amino-6-(D-ribitylamino)uracil = 6,7-dimethyl-8-(1-D-ribityl)lumazine + phosphate + 2 H2O + H(+). It functions in the pathway cofactor biosynthesis; riboflavin biosynthesis; riboflavin from 2-hydroxy-3-oxobutyl phosphate and 5-amino-6-(D-ribitylamino)uracil: step 1/2. Its function is as follows. Catalyzes the formation of 6,7-dimethyl-8-ribityllumazine by condensation of 5-amino-6-(D-ribitylamino)uracil with 3,4-dihydroxy-2-butanone 4-phosphate. This is the penultimate step in the biosynthesis of riboflavin. The sequence is that of 6,7-dimethyl-8-ribityllumazine synthase from Proteus mirabilis (strain HI4320).